A 740-amino-acid chain; its full sequence is Ion-translocating oxidoreductase complex subunit C (740 aa).

4Fe-4S ferredoxin-type domains follow at residues 369–397 (GEPQ…QQLY) and 407–436 (KATT…VQYF). Residues Cys-377, Cys-380, Cys-383, Cys-387, Cys-416, Cys-419, Cys-422, and Cys-426 each coordinate [4Fe-4S] cluster. Residues 602-684 (KLEQQQANAE…EPEEQVDPRK (83 aa)) form a disordered region. Low complexity-rich tracts occupy residues 605–615 (QQQANAEPEQQ) and 637–647 (QQQANAEPEQQ).

Belongs to the 4Fe4S bacterial-type ferredoxin family. RnfC subfamily. As to quaternary structure, the complex is composed of six subunits: RsxA, RsxB, RsxC, RsxD, RsxE and RsxG. The cofactor is [4Fe-4S] cluster.

The protein localises to the cell inner membrane. Its function is as follows. Part of a membrane-bound complex that couples electron transfer with translocation of ions across the membrane. Required to maintain the reduced state of SoxR. This Escherichia coli O7:K1 (strain IAI39 / ExPEC) protein is Ion-translocating oxidoreductase complex subunit C.